The primary structure comprises 158 residues: Biotin carboxyl carrier protein of acetyl-CoA carboxylase (158 aa).

The region spanning 81–157 is the Biotinyl-binding domain; it reads YATIVSPMVG…DCGQALMKVE (77 aa). At Lys-123 the chain carries N6-biotinyllysine.

It localises to the plastid. It is found in the chloroplast. Its pathway is lipid metabolism; fatty acid biosynthesis. This protein is a component of the acetyl coenzyme A carboxylase complex; first, biotin carboxylase catalyzes the carboxylation of the carrier protein and then the transcarboxylase transfers the carboxyl group to form malonyl-CoA. The polypeptide is Biotin carboxyl carrier protein of acetyl-CoA carboxylase (accB) (Pyropia yezoensis (Susabi-nori)).